Reading from the N-terminus, the 565-residue chain is NAD-dependent malic enzyme (565 aa).

Tyrosine 104 functions as the Proton donor in the catalytic mechanism. Arginine 157 contributes to the NAD(+) binding site. Lysine 175 (proton acceptor) is an active-site residue. A divalent metal cation-binding residues include glutamate 246, aspartate 247, and aspartate 270. NAD(+) is bound by residues aspartate 270 and asparagine 418.

Belongs to the malic enzymes family. As to quaternary structure, homotetramer. The cofactor is Mg(2+). Mn(2+) is required as a cofactor.

It catalyses the reaction (S)-malate + NAD(+) = pyruvate + CO2 + NADH. The catalysed reaction is oxaloacetate + H(+) = pyruvate + CO2. This chain is NAD-dependent malic enzyme, found in Salmonella agona (strain SL483).